A 115-amino-acid polypeptide reads, in one-letter code: Divalent-cation tolerance protein CutA (115 aa).

Cu cation contacts are provided by C19, H86, and H87.

The protein belongs to the CutA family. As to quaternary structure, homotrimer. Cu cation is required as a cofactor.

It localises to the cytoplasm. Its function is as follows. Involved in resistance toward heavy metals. In Citrobacter koseri (strain ATCC BAA-895 / CDC 4225-83 / SGSC4696), this protein is Divalent-cation tolerance protein CutA.